We begin with the raw amino-acid sequence, 154 residues long: Large ribosomal subunit protein uL15 (154 aa).

A disordered region spans residues 1–44 (MKLNELGNCKGATRNRKRVGRGIGSGTGKTSGRGVKGQKSRSGV). A compositionally biased stretch (gly residues) spans 21 to 35 (RGIGSGTGKTSGRGV).

The protein belongs to the universal ribosomal protein uL15 family. As to quaternary structure, part of the 50S ribosomal subunit.

In terms of biological role, binds to the 23S rRNA. This chain is Large ribosomal subunit protein uL15, found in Bartonella quintana (strain Toulouse) (Rochalimaea quintana).